A 156-amino-acid chain; its full sequence is Small ribosomal subunit protein uS7 (156 aa).

The protein belongs to the universal ribosomal protein uS7 family. In terms of assembly, part of the 30S ribosomal subunit. Contacts proteins S9 and S11.

Its function is as follows. One of the primary rRNA binding proteins, it binds directly to 16S rRNA where it nucleates assembly of the head domain of the 30S subunit. Is located at the subunit interface close to the decoding center, probably blocks exit of the E-site tRNA. The protein is Small ribosomal subunit protein uS7 of Ruegeria pomeroyi (strain ATCC 700808 / DSM 15171 / DSS-3) (Silicibacter pomeroyi).